We begin with the raw amino-acid sequence, 381 residues long: Flagellar P-ring protein (381 aa).

A signal peptide spans 1 to 33 (MQFFNTLHPTRPHWLLAALCLIASLLGAGTAQA).

It belongs to the FlgI family. The basal body constitutes a major portion of the flagellar organelle and consists of four rings (L,P,S, and M) mounted on a central rod.

It localises to the periplasm. The protein localises to the bacterial flagellum basal body. Its function is as follows. Assembles around the rod to form the L-ring and probably protects the motor/basal body from shearing forces during rotation. This Albidiferax ferrireducens (strain ATCC BAA-621 / DSM 15236 / T118) (Rhodoferax ferrireducens) protein is Flagellar P-ring protein.